Consider the following 249-residue polypeptide: Coproheme decarboxylase (249 aa).

Residues R131, 145–149, H172, Q185, and S223 contribute to the Fe-coproporphyrin III site; that span reads YPMNK. The active site involves Y145.

Belongs to the ChdC family. Type 1 subfamily. It depends on Fe-coproporphyrin III as a cofactor.

The enzyme catalyses Fe-coproporphyrin III + 2 H2O2 + 2 H(+) = heme b + 2 CO2 + 4 H2O. The catalysed reaction is Fe-coproporphyrin III + H2O2 + H(+) = harderoheme III + CO2 + 2 H2O. It carries out the reaction harderoheme III + H2O2 + H(+) = heme b + CO2 + 2 H2O. It functions in the pathway porphyrin-containing compound metabolism; protoheme biosynthesis. Its function is as follows. Involved in coproporphyrin-dependent heme b biosynthesis. Catalyzes the decarboxylation of Fe-coproporphyrin III (coproheme) to heme b (protoheme IX), the last step of the pathway. The reaction occurs in a stepwise manner with a three-propionate intermediate. In Thermus thermophilus (strain ATCC BAA-163 / DSM 7039 / HB27), this protein is Coproheme decarboxylase.